We begin with the raw amino-acid sequence, 239 residues long: Outer membrane protein PagN (239 aa).

The first 22 residues, 1-22, serve as a signal peptide directing secretion; it reads MKNFFAVCIIPLVVAWSATASA. Topologically, residues 23–26 are periplasmic; that stretch reads KEGI. The beta stranded transmembrane segment at 27–36 threads the bilayer; sequence YITGKAGTSV. Topologically, residues 37–65 are extracellular; that stretch reads VNVYGINSTFSQDEIVNGHATLPDRTKGV. The beta stranded transmembrane segment at 66-76 threads the bilayer; sequence FGGGVAIGYDF. Residues 77 to 81 lie on the Periplasmic side of the membrane; sequence YDPFQ. A beta stranded membrane pass occupies residues 82–92; sequence LPVRLELDTTF. Over 93–120 the chain is Extracellular; it reads RGETDAKGGQDIIAFGDPVHINVKNQVR. A beta stranded membrane pass occupies residues 121-132; sequence MTTYMVNGYYDF. Over 133-137 the chain is Periplasmic; sequence HNSTA. Residues 138–148 traverse the membrane as a beta stranded segment; it reads FTPYISAGVGL. Residues 149-174 lie on the Extracellular side of the membrane; the sequence is AHVKLSNNTIPVGFGINETLSASKNN. A beta stranded membrane pass occupies residues 175–185; that stretch reads FAWGAGIGAKY. At 186–190 the chain is on the periplasmic side; sequence AVTDN. The beta stranded transmembrane segment at 191–200 threads the bilayer; that stretch reads IMIDASYKYI. Residues 201-230 are Extracellular-facing; it reads NAGKVSISKNHYAGDEHTAYDADTKAASND. Residues 231–239 traverse the membrane as a beta stranded segment; the sequence is FMLGITYAF.

Its subcellular location is the cell outer membrane. In terms of biological role, haemagglutinin that facilitates the adhesion to and invasion of epithelial mammalian cells. Utilizes heparinated proteoglycan as a receptor to successfully invade host cells. The polypeptide is Outer membrane protein PagN (pagN) (Salmonella typhimurium (strain LT2 / SGSC1412 / ATCC 700720)).